The chain runs to 333 residues: UPF0284 protein VNG_1572C (333 aa).

Belongs to the UPF0284 family.

The polypeptide is UPF0284 protein VNG_1572C (Halobacterium salinarum (strain ATCC 700922 / JCM 11081 / NRC-1) (Halobacterium halobium)).